A 368-amino-acid chain; its full sequence is tRNA/tmRNA (uracil-C(5))-methyltransferase (368 aa).

5 residues coordinate S-adenosyl-L-methionine: Gln-192, Tyr-220, Asn-225, Glu-241, and Asp-301. Residue Cys-326 is the Nucleophile of the active site. Residue Glu-360 is the Proton acceptor of the active site.

Belongs to the class I-like SAM-binding methyltransferase superfamily. RNA M5U methyltransferase family. TrmA subfamily.

It carries out the reaction uridine(54) in tRNA + S-adenosyl-L-methionine = 5-methyluridine(54) in tRNA + S-adenosyl-L-homocysteine + H(+). The catalysed reaction is uridine(341) in tmRNA + S-adenosyl-L-methionine = 5-methyluridine(341) in tmRNA + S-adenosyl-L-homocysteine + H(+). In terms of biological role, dual-specificity methyltransferase that catalyzes the formation of 5-methyluridine at position 54 (m5U54) in all tRNAs, and that of position 341 (m5U341) in tmRNA (transfer-mRNA). This is tRNA/tmRNA (uracil-C(5))-methyltransferase from Actinobacillus pleuropneumoniae serotype 5b (strain L20).